The following is a 295-amino-acid chain: Phosphatidylserine decarboxylase proenzyme (295 aa).

Active-site charge relay system; for autoendoproteolytic cleavage activity residues include Asp-113, His-169, and Ser-256. The active-site Schiff-base intermediate with substrate; via pyruvic acid; for decarboxylase activity is the Ser-256. Ser-256 is modified (pyruvic acid (Ser); by autocatalysis).

Belongs to the phosphatidylserine decarboxylase family. PSD-B subfamily. Prokaryotic type II sub-subfamily. In terms of assembly, heterodimer of a large membrane-associated beta subunit and a small pyruvoyl-containing alpha subunit. The cofactor is pyruvate. In terms of processing, is synthesized initially as an inactive proenzyme. Formation of the active enzyme involves a self-maturation process in which the active site pyruvoyl group is generated from an internal serine residue via an autocatalytic post-translational modification. Two non-identical subunits are generated from the proenzyme in this reaction, and the pyruvate is formed at the N-terminus of the alpha chain, which is derived from the carboxyl end of the proenzyme. The autoendoproteolytic cleavage occurs by a canonical serine protease mechanism, in which the side chain hydroxyl group of the serine supplies its oxygen atom to form the C-terminus of the beta chain, while the remainder of the serine residue undergoes an oxidative deamination to produce ammonia and the pyruvoyl prosthetic group on the alpha chain. During this reaction, the Ser that is part of the protease active site of the proenzyme becomes the pyruvoyl prosthetic group, which constitutes an essential element of the active site of the mature decarboxylase.

Its subcellular location is the cell membrane. It carries out the reaction a 1,2-diacyl-sn-glycero-3-phospho-L-serine + H(+) = a 1,2-diacyl-sn-glycero-3-phosphoethanolamine + CO2. The protein operates within phospholipid metabolism; phosphatidylethanolamine biosynthesis; phosphatidylethanolamine from CDP-diacylglycerol: step 2/2. Catalyzes the formation of phosphatidylethanolamine (PtdEtn) from phosphatidylserine (PtdSer). The protein is Phosphatidylserine decarboxylase proenzyme of Clostridium botulinum (strain 657 / Type Ba4).